The sequence spans 503 residues: Cytochrome P450 monooxygenase roqO (503 aa).

Residues 11 to 31 form a helical membrane-spanning segment; that stretch reads YSGTACAISLFIFGITLLFPF. Residue Asn205 is glycosylated (N-linked (GlcNAc...) asparagine). Cys444 lines the heme pocket.

Belongs to the cytochrome P450 family. Requires heme as cofactor.

Its subcellular location is the membrane. It participates in alkaloid biosynthesis. Cytochrome P450 monooxygenase; part of the gene cluster that mediates the biosynthesis of the mycotoxin meleagrin. The first stage is catalyzed by the dipeptide synthase roqA which condenses histidine and tryptophan to produce histidyltryptophanyldiketopiperazine (HTD). HTD is then converted to roquefortine C through two possible pathways. In the first pathway, prenyltransferase roqD transforms HTD to the intermediate roquefortine D, which is in turn converted to roquefortine C by the cytochrome P450 monooxygenase roqR. In the second pathway, HTD is first converted to the intermediate dehydrohistidyltryptophanyldi-ketopiperazine (DHTD) by roqR which is then prenylated by roqD to form roquefortine C. Roquefortine C can be further transformed to meleagrin via three more reactions including oxydation to glandicolin A by roqM, which is further reduced to glandicoline B by roqO. Finally, glandicoline B is converted to meleagrin by the glandicoline B O-methyltransferase roqN. More studies identified further branching and additional metabolites produced by the roquefortine/meleagrin cluster, including roquefortine F, roquefortine L, roquefortine M, roquefortine N and neoxaline. The sequence is that of Cytochrome P450 monooxygenase roqO from Penicillium rubens (strain ATCC 28089 / DSM 1075 / NRRL 1951 / Wisconsin 54-1255) (Penicillium chrysogenum).